The primary structure comprises 216 residues: N-(5'-phosphoribosyl)anthranilate isomerase (216 aa).

The protein belongs to the TrpF family.

The enzyme catalyses N-(5-phospho-beta-D-ribosyl)anthranilate = 1-(2-carboxyphenylamino)-1-deoxy-D-ribulose 5-phosphate. The protein operates within amino-acid biosynthesis; L-tryptophan biosynthesis; L-tryptophan from chorismate: step 3/5. The polypeptide is N-(5'-phosphoribosyl)anthranilate isomerase (Leptospira borgpetersenii serovar Hardjo-bovis (strain JB197)).